The chain runs to 460 residues: Bifunctional protein GlmU (460 aa).

The segment at 1–229 (MTNYAIILAA…FNESLGVNDR (229 aa)) is pyrophosphorylase. Residues 8 to 11 (LAAG), Lys22, Gln72, and 77 to 78 (GT) contribute to the UDP-N-acetyl-alpha-D-glucosamine site. Asp102 lines the Mg(2+) pocket. UDP-N-acetyl-alpha-D-glucosamine is bound by residues Gly139, Glu154, Asn169, and Asn227. Asn227 is a binding site for Mg(2+). The interval 230 to 250 (VALATAETVMRQRITQKHMVN) is linker. The N-acetyltransferase stretch occupies residues 251 to 460 (GVTFQNPETV…RLAHHPSRSK (210 aa)). The UDP-N-acetyl-alpha-D-glucosamine site is built by Arg332 and Lys350. His362 acts as the Proton acceptor in catalysis. UDP-N-acetyl-alpha-D-glucosamine is bound by residues Tyr365 and Asn376. Acetyl-CoA-binding positions include Ala379, 385 to 386 (NY), Ser404, Ala422, and Arg439.

This sequence in the N-terminal section; belongs to the N-acetylglucosamine-1-phosphate uridyltransferase family. In the C-terminal section; belongs to the transferase hexapeptide repeat family. As to quaternary structure, homotrimer. It depends on Mg(2+) as a cofactor.

The protein resides in the cytoplasm. The catalysed reaction is alpha-D-glucosamine 1-phosphate + acetyl-CoA = N-acetyl-alpha-D-glucosamine 1-phosphate + CoA + H(+). The enzyme catalyses N-acetyl-alpha-D-glucosamine 1-phosphate + UTP + H(+) = UDP-N-acetyl-alpha-D-glucosamine + diphosphate. Its pathway is nucleotide-sugar biosynthesis; UDP-N-acetyl-alpha-D-glucosamine biosynthesis; N-acetyl-alpha-D-glucosamine 1-phosphate from alpha-D-glucosamine 6-phosphate (route II): step 2/2. It participates in nucleotide-sugar biosynthesis; UDP-N-acetyl-alpha-D-glucosamine biosynthesis; UDP-N-acetyl-alpha-D-glucosamine from N-acetyl-alpha-D-glucosamine 1-phosphate: step 1/1. It functions in the pathway bacterial outer membrane biogenesis; LPS lipid A biosynthesis. In terms of biological role, catalyzes the last two sequential reactions in the de novo biosynthetic pathway for UDP-N-acetylglucosamine (UDP-GlcNAc). The C-terminal domain catalyzes the transfer of acetyl group from acetyl coenzyme A to glucosamine-1-phosphate (GlcN-1-P) to produce N-acetylglucosamine-1-phosphate (GlcNAc-1-P), which is converted into UDP-GlcNAc by the transfer of uridine 5-monophosphate (from uridine 5-triphosphate), a reaction catalyzed by the N-terminal domain. The sequence is that of Bifunctional protein GlmU from Streptococcus pyogenes serotype M28 (strain MGAS6180).